Reading from the N-terminus, the 64-residue chain is UPF0434 protein MADE_1009415 (64 aa).

It belongs to the UPF0434 family.

The polypeptide is UPF0434 protein MADE_1009415 (Alteromonas mediterranea (strain DSM 17117 / CIP 110805 / LMG 28347 / Deep ecotype)).